The primary structure comprises 92 residues: Small ribosomal subunit protein uS19c (92 aa).

The protein belongs to the universal ribosomal protein uS19 family.

It is found in the plastid. The protein localises to the chloroplast. In terms of biological role, protein S19 forms a complex with S13 that binds strongly to the 16S ribosomal RNA. The polypeptide is Small ribosomal subunit protein uS19c (Manihot esculenta (Cassava)).